Consider the following 241-residue polypeptide: Proteasome subunit alpha (241 aa).

This sequence belongs to the peptidase T1A family. In terms of assembly, the 20S proteasome core is composed of 14 alpha and 14 beta subunits that assemble into four stacked heptameric rings, resulting in a barrel-shaped structure. The two inner rings, each composed of seven catalytic beta subunits, are sandwiched by two outer rings, each composed of seven alpha subunits. The catalytic chamber with the active sites is on the inside of the barrel. Has a gated structure, the ends of the cylinder being occluded by the N-termini of the alpha-subunits. Is capped by the proteasome-associated ATPase, ARC.

The protein localises to the cytoplasm. Its pathway is protein degradation; proteasomal Pup-dependent pathway. Its activity is regulated as follows. The formation of the proteasomal ATPase ARC-20S proteasome complex, likely via the docking of the C-termini of ARC into the intersubunit pockets in the alpha-rings, may trigger opening of the gate for substrate entry. Interconversion between the open-gate and close-gate conformations leads to a dynamic regulation of the 20S proteasome proteolysis activity. Its function is as follows. Component of the proteasome core, a large protease complex with broad specificity involved in protein degradation. The polypeptide is Proteasome subunit alpha (Parafrankia sp. (strain EAN1pec)).